The chain runs to 73 residues: Large ribosomal subunit protein bL31c (73 aa).

It belongs to the bacterial ribosomal protein bL31 family. Type A subfamily. As to quaternary structure, part of the 50S ribosomal subunit.

Its subcellular location is the plastid. It is found in the chloroplast. In terms of biological role, binds the 23S rRNA. The protein is Large ribosomal subunit protein bL31c of Palmaria palmata (Dulse).